The sequence spans 45 residues: uncharacterized protein (45 aa).

Residues 1 to 26 (MIMGKDRQEKKLKASGRVESDRDQSI) show a composition bias toward basic and acidic residues. The disordered stretch occupies residues 1–45 (MIMGKDRQEKKLKASGRVESDRDQSIHYDGATSLEQNGRFKKRKS).

This is an uncharacterized protein from Bacillus subtilis (strain 168).